Here is a 405-residue protein sequence, read N- to C-terminus: Nodal homolog 2-A (405 aa).

The signal sequence occupies residues 1–18 (MASLGVILFFVIASLIHG). Residues 19–282 (KPIHSERKAA…RVTDTRRPRR (264 aa)) constitute a propeptide that is removed on maturation. N-linked (GlcNAc...) asparagine glycosylation is found at Asn-71, Asn-172, and Asn-343. Disulfide bonds link Cys-305-Cys-371, Cys-334-Cys-402, and Cys-338-Cys-404.

The protein belongs to the TGF-beta family. In terms of assembly, homodimer; disulfide-linked. Forms heterodimers with the TGF-beta family member derriere. Interacts with tsku; enhances nodal2 activity. As to expression, first localized to the vegetal region of the blastula. Just prior to gastrulation (stage 10), this expression disappears and instead becomes localized to the dorsal marginal zone, with enrichment in the organizer.

It localises to the secreted. Functionally, cooperation and regulatory loops of multiple nodals are essential for mesendoderm patterning in early embryos. Essential for mesoderm formation and axial patterning during embryonic development. Activates the activin-like signaling pathway to induce dorsal and ventral mesoderm in animal cap ectoderm. In addition, also dorsalizes ventral marginal zone (VMZ) tissues during gastrulation. Induces muscle actin. Appears to act as both a short-range and long-range morphogen. The unprocessed protein inhibits bmp- and wnt-signaling. The chain is Nodal homolog 2-A (nodal2-a) from Xenopus laevis (African clawed frog).